The primary structure comprises 738 residues: Interleukin-12 receptor subunit beta-1 (738 aa).

Positions 1–19 (MDMMGLAGTSKHITFLLLC) are cleaved as a signal peptide. Over 20-565 (QLGASGPGDG…QRFSFEVQIS (546 aa)) the chain is Extracellular. Fibronectin type-III domains lie at 47-152 (GPRN…TPPL), 152-258 (LGHI…PEVL), 259-359 (PQAK…LPAQ), 360-465 (ELTE…GNAS), and 469-565 (TPRH…VQIS). N-linked (GlcNAc...) asparagine glycosylation occurs at asparagine 50. Cysteine 53 and cysteine 63 form a disulfide bridge. Asparagine 73, asparagine 86, asparagine 130, asparagine 144, asparagine 169, and asparagine 188 each carry an N-linked (GlcNAc...) asparagine glycan. Positions 244–248 (WSDWS) match the WSXWS motif motif. N-linked (GlcNAc...) asparagine glycans are attached at residues asparagine 330, asparagine 368, asparagine 374, asparagine 401, asparagine 463, and asparagine 477. The chain crosses the membrane as a helical span at residues 566 to 591 (RLSIIFASLGSFASVLLVGSLGYIGL). The Cytoplasmic segment spans residues 592-738 (NRAAWHLCPP…PGPPTLGQEA (147 aa)). Positions 598–606 (LCPPLPTPC) match the Box 1 motif motif.

The protein belongs to the type I cytokine receptor family. Type 2 subfamily. Dimer or oligomer; disulfide-linked. Interacts with IL12RB2 to form the high affinity IL12 receptor. Heterodimer with IL23R; in presence of IL23. The heterodimer forms the IL23 receptor.

It is found in the membrane. In terms of biological role, functions as an interleukin receptor which binds interleukin-12 with low affinity and is involved in IL12 transduction. Associated with IL12RB2 it forms a functional, high affinity receptor for IL12. Also associates with IL23R to form the interleukin-23 receptor which functions in IL23 signal transduction probably through activation of the Jak-Stat signaling cascade. The chain is Interleukin-12 receptor subunit beta-1 (Il12rb1) from Mus musculus (Mouse).